Here is a 2162-residue protein sequence, read N- to C-terminus: Polyketide synthase 1 (2162 aa).

The N-terminal acylcarrier protein transacylase domain (SAT) stretch occupies residues 19-264 (FVFGDQTSCN…TPLAVHAPYH (246 aa)). The Ketosynthase family 3 (KS3) domain maps to 397–841 (DSKIAIIGMS…GGNTALLVED (445 aa)). Catalysis depends on for beta-ketoacyl synthase activity residues Cys578, His713, and His757. A malonyl-CoA:ACP transacylase (MAT) domain region spans residues 941–1245 (AFVFSGQGSQ…PSLMRSHDGW (305 aa)). Ser1030 (for acyl/malonyl transferase activity) is an active-site residue. Residues 1322-1636 (TASVHRIVRE…RRVLDAAMPA (315 aa)) are product template (PT) domain. The segment at 1326–1459 (HRIVRESVDR…SSLCFGESRA (134 aa)) is N-terminal hotdog fold. Positions 1326 to 1631 (HRIVRESVDR…FQGVPRRVLD (306 aa)) constitute a PKS/mFAS DH domain. The active-site Proton acceptor; for dehydratase activity is the His1358. The C-terminal hotdog fold stretch occupies residues 1486-1631 (LNSRLSSGVI…FQGVPRRVLD (146 aa)). The active-site Proton donor; for dehydratase activity is the Asp1545. The disordered stretch occupies residues 1633-1669 (AMPAPKSPNKTRDHASPNATISRAKPPQGSSPASSAQ). The segment covering 1658-1669 (PPQGSSPASSAQ) has biased composition (low complexity). Residues 1692–1766 (IDPMHAVLRI…DFAVHLGLDT (75 aa)) form the Carrier 1 domain. Ser1726 is subject to O-(pantetheine 4'-phosphoryl)serine. A compositionally biased stretch (low complexity) spans 1772 to 1783 (SSGESNVSGGVS). Residues 1772-1809 (SSGESNVSGGVSPRSDSVAAMSSDVTTPPAQSPLGSMS) form a disordered region. Positions 1794–1809 (SDVTTPPAQSPLGSMS) are enriched in polar residues. The 78-residue stretch at 1807-1884 (SMSSSPCEDL…SFKHVFEQEI (78 aa)) folds into the Carrier 2 domain. O-(pantetheine 4'-phosphoryl)serine is present on Ser1844. Positions 1896 to 2160 (LKKYHATSTL…ERVAAFIRSA (265 aa)) are thioesterase (TE) domain. The active-site For thioesterase activity is the Ser1987.

Functionally, polyketide synthase; part of the Pks1 gene cluster that mediates the biosynthesis of an anthraquinone derivative pigment that contributes to conidial pigmentation that provides protection from UV radiation, heat and cold stress. The polyketide synthase Pks1 produces 1-acetyl-2,4,6,8-tetrahydroxy-9,10-anthraquinone though condensation of acetyl-CoA with malonyl-CoA. The dehydratase EthD and the laccase Mlac1 further convert the anthraquinone derivative into the final conidial pigment. This chain is Polyketide synthase 1, found in Metarhizium album (strain ARSEF 1941).